The following is a 340-amino-acid chain: MLQPPKIVAELSANHNQDLNLAKESLHAIKESGADFVKLQTYTPSCMTLNSKEDPFIIQGTLWDKENLYELYQKASTPLEWHAELFELARKLDLGIFSSPFSSQALELLESLNCPMYKIASFEIVDLDLIEKAARTQKPIILSSGIATHTELQDAISLCRRVNNFDITLLKCVSAYPSKIEDANLLSMVKLGEIFGVKFGLSDHTIGSLCPILATTLGASMIEKHFILNKSLQTPDSAFSMDFNGFKSMVEAIKQSVLALGEEEPRINPKTLEKRRFFARSLFVIKDIQKGEALTENNIKALRPNLGLHPKFYKEILGQKASKFLKANTPLSADDIERSL.

The 57-residue stretch at S281 to E337 folds into the AFP-like domain.

This sequence belongs to the pseudaminic acid synthase family. It depends on a divalent metal cation as a cofactor.

The catalysed reaction is 2,4-diacetamido-2,4,6-trideoxy-beta-L-altrose + phosphoenolpyruvate + H2O = pseudaminate + phosphate. Catalyzes the fifth step in the biosynthesis of pseudaminic acid, a sialic-acid-like sugar that is used to modify flagellin. Catalyzes the condensation of phosphoenolpyruvate with 2,4-diacetamido-2,4,6-trideoxy-beta-l-altropyranose, forming pseudaminic acid. The sequence is that of Pseudaminic acid synthase (pseI) from Helicobacter pylori (strain ATCC 700392 / 26695) (Campylobacter pylori).